We begin with the raw amino-acid sequence, 298 residues long: Probable tRNA(His) guanylyltransferase (298 aa).

Residues aspartate 58, glycine 59, and aspartate 105 each coordinate Mg(2+). Residues 58 to 63 and 104 to 105 contribute to the GTP site; these read DGRNFH and SD.

The protein belongs to the tRNA(His) guanylyltransferase family. In terms of assembly, homotetramer. Interacts with MFN1 and MFN2; functions as a guanyl-nucleotide exchange factor/GEF for MFN2 and also probably MFN1. It depends on Mg(2+) as a cofactor.

Its subcellular location is the cytoplasm. The protein localises to the mitochondrion. It carries out the reaction a 5'-end ribonucleotide-tRNA(His) + GTP + ATP + H2O = a 5'-end phospho-guanosine-ribonucleotide-tRNA(His) + AMP + 2 diphosphate + H(+). In terms of biological role, adds a GMP to the 5'-end of tRNA(His) after transcription and RNase P cleavage. This step is essential for proper recognition of the tRNA and for the fidelity of protein synthesis. Also functions as a guanyl-nucleotide exchange factor/GEF for the MFN1 and MFN2 mitofusins thereby regulating mitochondrial fusion. By regulating both mitochondrial dynamics and bioenergetic function, it contributes to cell survival following oxidative stress. The polypeptide is Probable tRNA(His) guanylyltransferase (Thg1l) (Mus musculus (Mouse)).